The chain runs to 545 residues: Membrane protein insertase YidC (545 aa).

4 helical membrane-spanning segments follow: residues 350–370 (IIGNWGWAIIVLTIIVKAVLY), 424–444 (LPMLLQIPVFIGLYWALFASV), 461–481 (ADPYYILPIIMAATMFAQTYL), and 498–518 (PLVFSVMFFFFPAGLVLYWVI).

It belongs to the OXA1/ALB3/YidC family. Type 1 subfamily. In terms of assembly, interacts with the Sec translocase complex via SecD. Specifically interacts with transmembrane segments of nascent integral membrane proteins during membrane integration.

Its subcellular location is the cell inner membrane. Its function is as follows. Required for the insertion and/or proper folding and/or complex formation of integral membrane proteins into the membrane. Involved in integration of membrane proteins that insert both dependently and independently of the Sec translocase complex, as well as at least some lipoproteins. Aids folding of multispanning membrane proteins. This Neisseria meningitidis serogroup A / serotype 4A (strain DSM 15465 / Z2491) protein is Membrane protein insertase YidC.